The primary structure comprises 273 residues: MSTIRPVFYVSDGTGITAETIGHSLLTQFSGFTFVTERMVFIDDAEKARDASQRILAASQRYRVRPIVVNSCVNPYLSVILAESGALMLDVFAPFIGLLEHELNTSRHSRIGRAHGMVDFETYHRRINAMNFALAHDDGVAASYDEAEVILVAVSRAGKTPTCIYLALHYGIRAANYPLIDEDLNSDQLPLRLRPYRKKLFGLTINPERLQQIRQERRPNSRYAALDTCKREVAAAERMFSAERITTLSTTHTSIEEISSKVLVTLGLQREMF.

ADP is bound at residue alanine 153–threonine 160.

It belongs to the pyruvate, phosphate/water dikinase regulatory protein family. PSRP subfamily.

The enzyme catalyses [pyruvate, water dikinase] + ADP = [pyruvate, water dikinase]-phosphate + AMP + H(+). It carries out the reaction [pyruvate, water dikinase]-phosphate + phosphate + H(+) = [pyruvate, water dikinase] + diphosphate. Its function is as follows. Bifunctional serine/threonine kinase and phosphorylase involved in the regulation of the phosphoenolpyruvate synthase (PEPS) by catalyzing its phosphorylation/dephosphorylation. This Xylella fastidiosa (strain 9a5c) protein is Putative phosphoenolpyruvate synthase regulatory protein.